The following is a 433-amino-acid chain: Histidinol dehydrogenase (433 aa).

Residues Y133, Q194, and N217 each contribute to the NAD(+) site. Positions 240, 262, and 265 each coordinate substrate. Positions 262 and 265 each coordinate Zn(2+). Catalysis depends on proton acceptor residues E330 and H331. Residues H331, D364, E418, and H423 each contribute to the substrate site. D364 lines the Zn(2+) pocket. Zn(2+) is bound at residue H423.

The protein belongs to the histidinol dehydrogenase family. Zn(2+) is required as a cofactor.

The catalysed reaction is L-histidinol + 2 NAD(+) + H2O = L-histidine + 2 NADH + 3 H(+). Its pathway is amino-acid biosynthesis; L-histidine biosynthesis; L-histidine from 5-phospho-alpha-D-ribose 1-diphosphate: step 9/9. Catalyzes the sequential NAD-dependent oxidations of L-histidinol to L-histidinaldehyde and then to L-histidine. The sequence is that of Histidinol dehydrogenase from Dechloromonas aromatica (strain RCB).